We begin with the raw amino-acid sequence, 215 residues long: Pyridoxine/pyridoxamine 5'-phosphate oxidase (215 aa).

Residues 9-12 and lysine 69 each bind substrate; that span reads RRDY. Residues 64 to 69, 79 to 80, lysine 86, and glutamine 108 each bind FMN; these read RILLLK and FT. 3 residues coordinate substrate: tyrosine 126, arginine 130, and serine 134. Residues 143–144 and tryptophan 188 each bind FMN; that span reads QS. A substrate-binding site is contributed by 194 to 196; sequence RLH. Arginine 198 serves as a coordination point for FMN.

It belongs to the pyridoxamine 5'-phosphate oxidase family. As to quaternary structure, homodimer. FMN is required as a cofactor.

It carries out the reaction pyridoxamine 5'-phosphate + O2 + H2O = pyridoxal 5'-phosphate + H2O2 + NH4(+). The enzyme catalyses pyridoxine 5'-phosphate + O2 = pyridoxal 5'-phosphate + H2O2. It functions in the pathway cofactor metabolism; pyridoxal 5'-phosphate salvage; pyridoxal 5'-phosphate from pyridoxamine 5'-phosphate: step 1/1. The protein operates within cofactor metabolism; pyridoxal 5'-phosphate salvage; pyridoxal 5'-phosphate from pyridoxine 5'-phosphate: step 1/1. In terms of biological role, catalyzes the oxidation of either pyridoxine 5'-phosphate (PNP) or pyridoxamine 5'-phosphate (PMP) into pyridoxal 5'-phosphate (PLP). In Pseudomonas fluorescens (strain SBW25), this protein is Pyridoxine/pyridoxamine 5'-phosphate oxidase.